The chain runs to 363 residues: Nicotinamide adenine dinucleotide transporter 2, mitochondrial (363 aa).

Solcar repeat units lie at residues 15–107 (REVA…LKDV), 115–203 (LSIG…IKQY), and 215–305 (LSPG…MLRF). 6 helical membrane passes run 21–41 (AGAGATAGAIAATFVCPLDVI), 82–102 (GLSPTIIALLPNWAVYFSVYG), 121–141 (MIAAAGAGAATSIATNPLWVV), 176–196 (LYSGILPSLAGVSHVAIQFPA), 215–235 (LSPGNVAIASSIAKVIASILT), and 277–299 (LYRGCATNLLRTTPSAVITFTTY). Residues 313–363 (ETNRSDDRRREEERKNLVSRRGEEEDKDLGLRESQTQSNKISTPHIPLGSK) are disordered. Residues 315-343 (NRSDDRRREEERKNLVSRRGEEEDKDLGL) are compositionally biased toward basic and acidic residues. A compositionally biased stretch (polar residues) spans 345–354 (ESQTQSNKIS).

This sequence belongs to the mitochondrial carrier (TC 2.A.29) family. In terms of tissue distribution, highly expressed in young meristematic shoot area, vascular bundles of leaves, developing siliques including the funiculi, petal veins, developing pollen and central cylinder of roots.

The protein resides in the mitochondrion membrane. With respect to regulation, inhibited by pyridoxal 5'-phosphate, bathophenanthroline, tannic acid, mersalyl, mercuric chloride, p-hydroxymercuribenzoate, p-hydroxymercuribenzoate sulfonate, bromocresol purple and N-ethylmaleimide. Its function is as follows. Mediates the NAD(+) import into chloroplast. Favors the NAD(+)(in)/ADP or AMP(out) antiport exchange, but is also able to catalyze a low unidirectional transport (uniport) of NAD(+). Transports NAD(+), nicotinic acid adenine dinucleotide, nicotinamide mononucleotide, nicotinic acid mononucleotide, FAD, FMN, TTP, TDP, TMP, UTP, UDP, UMP, CTP, CDP, CMP, GTP, GDP, GMP, 3'-AMP, ATP, ADP and AMP, has low transport activity with cAMP, NADH and alpha-NAD(+), and has no activity with NADP(+), NADPH, nicotinamide, nicotinic acid, adenosine, thiamine mono- or diphosphate, inorganic phosphate, CoA, folate, NaCl, malate, malonate, citrate, fumarate, aspartate, glutamate, S-adenosylmethionine, lysine, arginine, and ornithine. The sequence is that of Nicotinamide adenine dinucleotide transporter 2, mitochondrial (NDT2) from Arabidopsis thaliana (Mouse-ear cress).